Consider the following 333-residue polypeptide: Taste receptor type 2 member 38 (333 aa).

Residues 1 to 17 (MLTLTRIHTVSYEVRST) are Extracellular-facing. A helical membrane pass occupies residues 18-38 (FLFISVLEFAVGFLTNAFVFL). Over 39-55 (VNFWDVVKRQPLSNSDC) the chain is Cytoplasmic. Residues 56–76 (VLLCLSISRLFLHGLLFLSAI) traverse the membrane as a helical segment. Over 77 to 94 (QLTHFQKLSEPLNHSYQA) the chain is Extracellular. A helical membrane pass occupies residues 95–115 (IIMLWMIANQANLWLAACLSL). The Cytoplasmic portion of the chain corresponds to 116–142 (LYCSKLIRFSHTFLICLASWVSRKISQ). Residues 143-163 (MLLGIILCSCICTVLCVWCFF) form a helical membrane-spanning segment. Over 164-190 (SRPHFTVTTVLFMNNNTRLNWQIKDLN) the chain is Extracellular. An N-linked (GlcNAc...) asparagine glycan is attached at asparagine 178. A helical membrane pass occupies residues 191–211 (LFYSFLFCYLWSVPPFLLFLV). Residues 212–251 (SSGMLTVSLGRHMRTMKVYTRDSRDPSLEAHIKALKSLVS) are Cytoplasmic-facing. A helical transmembrane segment spans residues 252–272 (FFCFFVISSCAAFISVPLLIL). At 273–276 (WRDK) the chain is on the extracellular side. The helical transmembrane segment at 277-297 (IGVMVCVGIMAACPSGHAAVL) threads the bilayer. Residues 298–333 (ISGNAKLRRAVTTILLWAQSSLKVRADHKADSRTLC) are Cytoplasmic-facing.

The protein belongs to the G-protein coupled receptor T2R family.

It is found in the membrane. Its function is as follows. Receptor that may play a role in the perception of bitterness and is gustducin-linked. May play a role in sensing the chemical composition of the gastrointestinal content. The activity of this receptor may stimulate alpha gustducin, mediate PLC-beta-2 activation and lead to the gating of TRPM5. This Pan troglodytes (Chimpanzee) protein is Taste receptor type 2 member 38 (TAS2R38).